The primary structure comprises 53 residues: SLRLALICPGLLPIRNICVATSRSRGVFRKYKLSRIMLRDMGLQGLLPGFKKR.

It belongs to the universal ribosomal protein uS14 family.

It localises to the mitochondrion. The sequence is that of Small ribosomal subunit protein uS14m (RPS14) from Bigelowiella natans (Pedinomonas minutissima).